The following is a 613-amino-acid chain: WD40 repeat-containing protein HOS15 (613 aa).

The 33-residue stretch at Thr5–Lys37 folds into the LisH domain. Disordered stretches follow at residues Lys101 to Met174 and Glu193 to Gly214. WD repeat units follow at residues Gly263–Val302, Glu322–Ser362, Lys363–Gln402, Phe405–Thr443, Gly446–Asp485, Glu488–Ser536, Gly539–Thr580, and Asn582–Met613.

It localises to the nucleus. In terms of biological role, acts as a repressor of cold stress-regulated gene expression. Interacts specifically with and promotes deacetylation of histone H4. Plays a role in gene regulation for plant acclimation and tolerance to cold stress. This is WD40 repeat-containing protein HOS15 from Arabidopsis thaliana (Mouse-ear cress).